We begin with the raw amino-acid sequence, 440 residues long: tRNA-2-methylthio-N(6)-dimethylallyladenosine synthase (440 aa).

The 117-residue stretch at 2-118 folds into the MTTase N-terminal domain; that stretch reads PKYYIITYGC…LPKILESLDG (117 aa). 6 residues coordinate [4Fe-4S] cluster: C11, C47, C81, C155, C159, and C162. Residues 141–370 enclose the Radical SAM core domain; the sequence is RENKFQAWIP…ENLQRKIIYE (230 aa). Residues 373 to 436 enclose the TRAM domain; sequence LSRVGKEEIV…LWSLKGEVIR (64 aa).

Belongs to the methylthiotransferase family. MiaB subfamily. As to quaternary structure, monomer. [4Fe-4S] cluster is required as a cofactor.

It is found in the cytoplasm. It carries out the reaction N(6)-dimethylallyladenosine(37) in tRNA + (sulfur carrier)-SH + AH2 + 2 S-adenosyl-L-methionine = 2-methylsulfanyl-N(6)-dimethylallyladenosine(37) in tRNA + (sulfur carrier)-H + 5'-deoxyadenosine + L-methionine + A + S-adenosyl-L-homocysteine + 2 H(+). Functionally, catalyzes the methylthiolation of N6-(dimethylallyl)adenosine (i(6)A), leading to the formation of 2-methylthio-N6-(dimethylallyl)adenosine (ms(2)i(6)A) at position 37 in tRNAs that read codons beginning with uridine. The protein is tRNA-2-methylthio-N(6)-dimethylallyladenosine synthase of Dictyoglomus thermophilum (strain ATCC 35947 / DSM 3960 / H-6-12).